We begin with the raw amino-acid sequence, 249 residues long: MKEENEYIVKRRKKRRRKRITIFLFLLICILVTLCLKLPYFNIKYINVEGNKIIKSDNIIENSKLKKGNNIFYLNLNKYKDNIMQDPYIKNVSIRQKLPNTIDIIVKERQAVFYINSGENYFIIDKNGVLLEIRKNISGMNLIKLDGVTLKNGKIGTEIPCDSRRLELINQITSVSIKDNNLKITDVDMSHILSLKVYFKNMCVVIGTPDDIYNKLNEAVNVIISQKLIDKKGYVDVSFKGNPVYSLQQ.

The Cytoplasmic segment spans residues 1–19 (MKEENEYIVKRRKKRRRKR). A helical membrane pass occupies residues 20-40 (ITIFLFLLICILVTLCLKLPY). Residues 41 to 109 (FNIKYINVEG…NTIDIIVKER (69 aa)) form the POTRA domain. At 41 to 249 (FNIKYINVEG…KGNPVYSLQQ (209 aa)) the chain is on the extracellular side.

Belongs to the FtsQ/DivIB family. DivIB subfamily.

It localises to the cell membrane. In terms of biological role, cell division protein that may be involved in stabilizing or promoting the assembly of the division complex. The polypeptide is Cell division protein DivIB (Clostridium acetobutylicum (strain ATCC 824 / DSM 792 / JCM 1419 / IAM 19013 / LMG 5710 / NBRC 13948 / NRRL B-527 / VKM B-1787 / 2291 / W)).